A 187-amino-acid polypeptide reads, in one-letter code: Phosphatidylethanolamine-binding protein 2 (187 aa).

Residues Ser-13, Ser-52, and Ser-54 each carry the phosphoserine modification.

It belongs to the phosphatidylethanolamine-binding protein family. As to expression, testis specific.

It localises to the cytoplasm. In terms of biological role, may bind to phospholipids. May act as serine protease inhibitor. The protein is Phosphatidylethanolamine-binding protein 2 (Pbp2) of Mus musculus (Mouse).